Reading from the N-terminus, the 282-residue chain is Parvulin-like PPIase (282 aa).

The first 20 residues, 1 to 20 (MKKLSVIFLSVSMLSSIAFC), serve as a signal peptide directing secretion. The region spanning 138–231 (KEQIKVAHIL…FGWHIIKVLE (94 aa)) is the PpiC domain.

Belongs to the PpiC/parvulin rotamase family.

It localises to the cell outer membrane. The catalysed reaction is [protein]-peptidylproline (omega=180) = [protein]-peptidylproline (omega=0). This is Parvulin-like PPIase (plp) from Rickettsia typhi (strain ATCC VR-144 / Wilmington).